Reading from the N-terminus, the 1027-residue chain is Error-prone DNA polymerase (1027 aa).

Belongs to the DNA polymerase type-C family. DnaE2 subfamily.

Its subcellular location is the cytoplasm. The catalysed reaction is DNA(n) + a 2'-deoxyribonucleoside 5'-triphosphate = DNA(n+1) + diphosphate. Functionally, DNA polymerase involved in damage-induced mutagenesis and translesion synthesis (TLS). It is not the major replicative DNA polymerase. This is Error-prone DNA polymerase from Dechloromonas aromatica (strain RCB).